The primary structure comprises 99 residues: Plastocyanin A'/A'' (99 aa).

One can recognise a Plastocyanin-like domain in the interval 1 to 99; the sequence is IEVLLGSDDG…AGMVGKVTVN (99 aa). The Cu cation site is built by His-37, Cys-84, His-87, and Met-92.

This sequence belongs to the plastocyanin family. Requires Cu(2+) as cofactor.

The protein localises to the plastid. The protein resides in the chloroplast thylakoid membrane. Its function is as follows. Participates in electron transfer between P700 and the cytochrome b6-f complex in photosystem I. The chain is Plastocyanin A'/A'' from Nicotiana tabacum (Common tobacco).